The sequence spans 117 residues: NADH-ubiquinone oxidoreductase chain 3 (117 aa).

Helical transmembrane passes span 4–24 (IIFI…LASI), 60–80 (ITII…MIII), and 86–106 (IMIW…GLYH).

This sequence belongs to the complex I subunit 3 family.

The protein localises to the mitochondrion membrane. It catalyses the reaction a ubiquinone + NADH + 5 H(+)(in) = a ubiquinol + NAD(+) + 4 H(+)(out). In terms of biological role, core subunit of the mitochondrial membrane respiratory chain NADH dehydrogenase (Complex I) that is believed to belong to the minimal assembly required for catalysis. Complex I functions in the transfer of electrons from NADH to the respiratory chain. The immediate electron acceptor for the enzyme is believed to be ubiquinone. This chain is NADH-ubiquinone oxidoreductase chain 3 (mt:ND3), found in Drosophila melanogaster (Fruit fly).